The sequence spans 517 residues: NAD(P)H-quinone oxidoreductase subunit 2 (517 aa).

14 helical membrane passes run 16–36 (ILPEGIVIITLVGVLVGDLIF), 43–63 (WLPYMAIIGLLASIVALYLAW), 80–100 (LSIVFRAIIALSTAVTILMSI), 110–130 (LAEFIAIMLTATLGGMFLCGA), 133–153 (LVMIFISLEMLSISSYLMTGY), 168–188 (LLIGASSSAIFLYGVSLLYGL), 211–231 (LGLAIALVFVIAGIAFKISAV), 245–265 (PTPVVAFLSVGSKAAGFALAI), 279–299 (WHFVFTALAILSMVLGNVVAL), 307–327 (MLAYSSIGQAGFVMIGLVAGT), 335–355 (VFYLLVYLFMNLGAFACIILF), 379–399 (LALSICLLSLGGIPPLAGFFG), 401–421 (IYLFWAGWQAELYGLVILGLV), and 467–487 (VGIVLTLIATSLAGILSNPLF).

The protein belongs to the complex I subunit 2 family. In terms of assembly, NDH-1 can be composed of about 15 different subunits; different subcomplexes with different compositions have been identified which probably have different functions.

The protein localises to the cellular thylakoid membrane. The enzyme catalyses a plastoquinone + NADH + (n+1) H(+)(in) = a plastoquinol + NAD(+) + n H(+)(out). It catalyses the reaction a plastoquinone + NADPH + (n+1) H(+)(in) = a plastoquinol + NADP(+) + n H(+)(out). Its function is as follows. NDH-1 shuttles electrons from an unknown electron donor, via FMN and iron-sulfur (Fe-S) centers, to quinones in the respiratory and/or the photosynthetic chain. The immediate electron acceptor for the enzyme in this species is believed to be plastoquinone. Couples the redox reaction to proton translocation, and thus conserves the redox energy in a proton gradient. Cyanobacterial NDH-1 also plays a role in inorganic carbon-concentration. The polypeptide is NAD(P)H-quinone oxidoreductase subunit 2 (Rippkaea orientalis (strain PCC 8801 / RF-1) (Cyanothece sp. (strain PCC 8801))).